The primary structure comprises 155 residues: 17.3 kDa class II heat shock protein (155 aa).

Residues 39–155 enclose the sHSP domain; it reads DAKAMAATPA…KPKTIEVKVA (117 aa).

This sequence belongs to the small heat shock protein (HSP20) family.

The protein resides in the cytoplasm. This chain is 17.3 kDa class II heat shock protein, found in Solanum peruvianum (Peruvian tomato).